The primary structure comprises 402 residues: Tyrosine-protein kinase transforming protein ros (402 aa).

Residues L98–L377 form the Protein kinase domain. Residues L104–V112 and K133 each bind ATP. D232 functions as the Proton acceptor in the catalytic mechanism. Phosphotyrosine; by autocatalysis is present on Y268.

It belongs to the protein kinase superfamily. Tyr protein kinase family. Insulin receptor subfamily.

The enzyme catalyses L-tyrosyl-[protein] + ATP = O-phospho-L-tyrosyl-[protein] + ADP + H(+). This Galliformes (UR2SV) protein is Tyrosine-protein kinase transforming protein ros (V-ROS).